The primary structure comprises 162 residues: Phosphopantetheine adenylyltransferase (162 aa).

Substrate is bound at residue S9. ATP-binding positions include 9–10 (SF) and H17. Residues K41, L73, and K87 each coordinate substrate. Residues 88–90 (GLR), E98, and 123–129 (CSFLSSS) each bind ATP.

The protein belongs to the bacterial CoaD family. Homohexamer. Mg(2+) serves as cofactor.

The protein resides in the cytoplasm. It catalyses the reaction (R)-4'-phosphopantetheine + ATP + H(+) = 3'-dephospho-CoA + diphosphate. It functions in the pathway cofactor biosynthesis; coenzyme A biosynthesis; CoA from (R)-pantothenate: step 4/5. Its function is as follows. Reversibly transfers an adenylyl group from ATP to 4'-phosphopantetheine, yielding dephospho-CoA (dPCoA) and pyrophosphate. This chain is Phosphopantetheine adenylyltransferase, found in Natranaerobius thermophilus (strain ATCC BAA-1301 / DSM 18059 / JW/NM-WN-LF).